Consider the following 215-residue polypeptide: Protein GET1 (215 aa).

Residues 1–4 lie on the Lumenal side of the membrane; the sequence is MINL. The chain crosses the membrane as a helical span at residues 5-24; it reads ALVIFLCTLLNQIVSWVGKS. Residues 25-108 are Cytoplasmic-facing; that stretch reads VLQEIAFTAY…SFSKKFSTLL (84 aa). The stretch at 73-94 forms a coiled coil; that stretch reads AKLRRKLDKGLADLEKTNNTLS. A helical membrane pass occupies residues 109–129; it reads WLMTTGAQFLLSWWFRKQPIF. Residues 130 to 153 are Lumenal-facing; the sequence is WLPEGWVPYPVAWLLSFPSAPIGS. A helical transmembrane segment spans residues 154–170; the sequence is VSSGAWGAICRRVLSTL. The Cytoplasmic segment spans residues 171–215; sequence QEIIQSLLAPSPAATGPVPTGPSSAKNDQPEAKIEALALEHEKLD. The disordered stretch occupies residues 182-202; that stretch reads PAATGPVPTGPSSAKNDQPEA.

Belongs to the WRB/GET1 family. In terms of assembly, interacts with GET3.

The protein localises to the endoplasmic reticulum membrane. Its function is as follows. Required for the post-translational delivery of tail-anchored (TA) proteins to the endoplasmic reticulum. Acts as a membrane receptor for soluble GET3, which recognizes and selectively binds the transmembrane domain of TA proteins in the cytosol. The protein is Protein GET1 of Cryptococcus neoformans var. neoformans serotype D (strain JEC21 / ATCC MYA-565) (Filobasidiella neoformans).